Consider the following 240-residue polypeptide: MTTARYNRVVLKLSGEALSGDQGYGIDPKVIQSISKQVKEVADLGVEVAIVVGGGNIWRGKVGSEMGMDRASADYMGMLATIMNSLALQDGLETIDVETRVQTSIEMRQVAEPYIRRKAIRHLEKKRVVIFAAGTGNPYFSTDTTAALRAAEIEAEVILMAKNNVDGVYTDDPKLNKSAKKYESLTYLEMLNEGLGVMDSTASSLCMDNNIPLIVFSIMEEGNIKRVVQGETIGTTIRGK.

12 to 15 serves as a coordination point for ATP; sequence KLSG. The tract at residues 20–25 is involved in allosteric activation by GTP; it reads GDQGYG. Gly-54 provides a ligand contact to UMP. 2 residues coordinate ATP: Gly-55 and Arg-59. UMP contacts are provided by residues Asp-74 and 135–142; that span reads TGNPYFST. Residues Asn-163, Tyr-169, and Asp-172 each contribute to the ATP site.

It belongs to the UMP kinase family. Homohexamer.

The protein localises to the cytoplasm. It catalyses the reaction UMP + ATP = UDP + ADP. It participates in pyrimidine metabolism; CTP biosynthesis via de novo pathway; UDP from UMP (UMPK route): step 1/1. With respect to regulation, allosterically activated by GTP. Inhibited by UTP. In terms of biological role, catalyzes the reversible phosphorylation of UMP to UDP. This Oceanobacillus iheyensis (strain DSM 14371 / CIP 107618 / JCM 11309 / KCTC 3954 / HTE831) protein is Uridylate kinase.